We begin with the raw amino-acid sequence, 220 residues long: Cytidylate kinase (220 aa).

10–18 (GPASSGKST) lines the ATP pocket.

This sequence belongs to the cytidylate kinase family. Type 1 subfamily.

It localises to the cytoplasm. The enzyme catalyses CMP + ATP = CDP + ADP. It carries out the reaction dCMP + ATP = dCDP + ADP. The chain is Cytidylate kinase from Lactococcus lactis subsp. cremoris (strain SK11).